A 214-amino-acid polypeptide reads, in one-letter code: Holliday junction branch migration complex subunit RuvA (214 aa).

A domain I region spans residues 1 to 67; the sequence is MVGWLKGLIV…ADNWQFFGFK (67 aa). A domain II region spans residues 68 to 146; sequence STQERDIFRE…AFAGMDPAPS (79 aa). The interval 147–154 is flexible linker; the sequence is LAEGVSSE. The domain III stretch occupies residues 155–214; it reads QMPESGADVEATLSMLGYDDLEVRRAIRAIAEGSDGPPPPGDDQDAWLRGCLQWLSRDSA.

The protein belongs to the RuvA family. As to quaternary structure, homotetramer. Forms an RuvA(8)-RuvB(12)-Holliday junction (HJ) complex. HJ DNA is sandwiched between 2 RuvA tetramers; dsDNA enters through RuvA and exits via RuvB. An RuvB hexamer assembles on each DNA strand where it exits the tetramer. Each RuvB hexamer is contacted by two RuvA subunits (via domain III) on 2 adjacent RuvB subunits; this complex drives branch migration. In the full resolvosome a probable DNA-RuvA(4)-RuvB(12)-RuvC(2) complex forms which resolves the HJ.

The protein localises to the cytoplasm. Functionally, the RuvA-RuvB-RuvC complex processes Holliday junction (HJ) DNA during genetic recombination and DNA repair, while the RuvA-RuvB complex plays an important role in the rescue of blocked DNA replication forks via replication fork reversal (RFR). RuvA specifically binds to HJ cruciform DNA, conferring on it an open structure. The RuvB hexamer acts as an ATP-dependent pump, pulling dsDNA into and through the RuvAB complex. HJ branch migration allows RuvC to scan DNA until it finds its consensus sequence, where it cleaves and resolves the cruciform DNA. This is Holliday junction branch migration complex subunit RuvA from Synechococcus sp. (strain CC9605).